The following is a 565-amino-acid chain: uncharacterized protein (565 aa).

13 helical membrane-spanning segments follow: residues 8–28, 43–63, 95–115, 137–157, 167–187, 227–247, 268–288, 314–334, 367–387, 424–444, 460–480, 482–502, and 516–536; these read ISFI…GIFF, LAIF…LALI, MTYL…ICSI, WLIW…IPPL, MVVS…GFIV, FTGI…FFAY, WALF…AVAL, IVFG…INGF, VVGV…FTVI, ATWT…GAIV, FLPA…VTII, PFIN…TVLG, and VMLI…VYVE.

This sequence to M.pneumoniae MPN_095 and MPN_096.

It localises to the cell membrane. This is an uncharacterized protein from Mycoplasma pneumoniae (strain ATCC 29342 / M129 / Subtype 1) (Mycoplasmoides pneumoniae).